Here is a 396-residue protein sequence, read N- to C-terminus: S-adenosylmethionine synthase (396 aa).

Histidine 16 is a binding site for ATP. Residue aspartate 18 coordinates Mg(2+). A K(+)-binding site is contributed by glutamate 44. Residues glutamate 57 and glutamine 100 each coordinate L-methionine. A flexible loop region spans residues 100-110; that stretch reads QSPDIAQGVDR. Residues 167-169, 233-234, aspartate 242, 248-249, alanine 265, and lysine 269 contribute to the ATP site; these read DAK, RF, and RK. L-methionine is bound at residue aspartate 242. Residue lysine 273 coordinates L-methionine.

This sequence belongs to the AdoMet synthase family. Homotetramer; dimer of dimers. The cofactor is Mg(2+). K(+) serves as cofactor.

It localises to the cytoplasm. The catalysed reaction is L-methionine + ATP + H2O = S-adenosyl-L-methionine + phosphate + diphosphate. It functions in the pathway amino-acid biosynthesis; S-adenosyl-L-methionine biosynthesis; S-adenosyl-L-methionine from L-methionine: step 1/1. Its function is as follows. Catalyzes the formation of S-adenosylmethionine (AdoMet) from methionine and ATP. The overall synthetic reaction is composed of two sequential steps, AdoMet formation and the subsequent tripolyphosphate hydrolysis which occurs prior to release of AdoMet from the enzyme. This chain is S-adenosylmethionine synthase, found in Paraburkholderia phytofirmans (strain DSM 17436 / LMG 22146 / PsJN) (Burkholderia phytofirmans).